A 216-amino-acid chain; its full sequence is Glutathione S-transferase D5 (216 aa).

A GST N-terminal domain is found at 1–80 (MDFYYSPRGS…YLVEKYGKDD (80 aa)). Residues 50-52 (HTI) and 64-66 (ESR) contribute to the glutathione site. The 122-residue stretch at 86-207 (DPKKQALVNQ…KGAVELKGVF (122 aa)) folds into the GST C-terminal domain.

Belongs to the GST superfamily. Delta family. As to quaternary structure, homodimer.

The enzyme catalyses RX + glutathione = an S-substituted glutathione + a halide anion + H(+). Conjugation of reduced glutathione to a wide number of exogenous and endogenous hydrophobic electrophiles. May be involved in detoxification. The protein is Glutathione S-transferase D5 of Drosophila melanogaster (Fruit fly).